The sequence spans 1133 residues: Error-prone DNA polymerase (1133 aa).

This sequence belongs to the DNA polymerase type-C family. DnaE2 subfamily.

The protein resides in the cytoplasm. It carries out the reaction DNA(n) + a 2'-deoxyribonucleoside 5'-triphosphate = DNA(n+1) + diphosphate. Functionally, DNA polymerase involved in damage-induced mutagenesis and translesion synthesis (TLS). It is not the major replicative DNA polymerase. This is Error-prone DNA polymerase from Anaeromyxobacter sp. (strain K).